The sequence spans 352 residues: Coproporphyrin III ferrochelatase (352 aa).

Fe-coproporphyrin III is bound by residues S52 and Y121. 2 residues coordinate Fe(2+): H178 and E267.

It belongs to the ferrochelatase family.

Its subcellular location is the cytoplasm. It carries out the reaction Fe-coproporphyrin III + 2 H(+) = coproporphyrin III + Fe(2+). Its pathway is porphyrin-containing compound metabolism; protoheme biosynthesis. Functionally, involved in coproporphyrin-dependent heme b biosynthesis. Catalyzes the insertion of ferrous iron into coproporphyrin III to form Fe-coproporphyrin III. The sequence is that of Coproporphyrin III ferrochelatase from Propionibacterium freudenreichii subsp. freudenreichii.